The sequence spans 95 residues: Aspartyl/glutamyl-tRNA(Asn/Gln) amidotransferase subunit C (95 aa).

Belongs to the GatC family. As to quaternary structure, heterotrimer of A, B and C subunits.

The catalysed reaction is L-glutamyl-tRNA(Gln) + L-glutamine + ATP + H2O = L-glutaminyl-tRNA(Gln) + L-glutamate + ADP + phosphate + H(+). The enzyme catalyses L-aspartyl-tRNA(Asn) + L-glutamine + ATP + H2O = L-asparaginyl-tRNA(Asn) + L-glutamate + ADP + phosphate + 2 H(+). Its function is as follows. Allows the formation of correctly charged Asn-tRNA(Asn) or Gln-tRNA(Gln) through the transamidation of misacylated Asp-tRNA(Asn) or Glu-tRNA(Gln) in organisms which lack either or both of asparaginyl-tRNA or glutaminyl-tRNA synthetases. The reaction takes place in the presence of glutamine and ATP through an activated phospho-Asp-tRNA(Asn) or phospho-Glu-tRNA(Gln). In Paracoccus denitrificans (strain Pd 1222), this protein is Aspartyl/glutamyl-tRNA(Asn/Gln) amidotransferase subunit C.